A 413-amino-acid chain; its full sequence is Tyrosine--tRNA ligase (413 aa).

Tyrosine 33 contacts L-tyrosine. A 'HIGH' region motif is present at residues 38-47 (PTADSLHVGH). Residues tyrosine 162 and glutamine 166 each contribute to the L-tyrosine site. The short motif at 225–229 (KFGKT) is the 'KMSKS' region element. Lysine 228 lines the ATP pocket. The 68-residue stretch at 346–413 (TSAIDAIVNV…KKKYYLLEIK (68 aa)) folds into the S4 RNA-binding domain.

Belongs to the class-I aminoacyl-tRNA synthetase family. TyrS type 1 subfamily. In terms of assembly, homodimer.

It localises to the cytoplasm. It catalyses the reaction tRNA(Tyr) + L-tyrosine + ATP = L-tyrosyl-tRNA(Tyr) + AMP + diphosphate + H(+). Catalyzes the attachment of tyrosine to tRNA(Tyr) in a two-step reaction: tyrosine is first activated by ATP to form Tyr-AMP and then transferred to the acceptor end of tRNA(Tyr). This chain is Tyrosine--tRNA ligase, found in Mesoplasma florum (strain ATCC 33453 / NBRC 100688 / NCTC 11704 / L1) (Acholeplasma florum).